A 382-amino-acid chain; its full sequence is Lipid-A-disaccharide synthase (382 aa).

It belongs to the LpxB family.

It carries out the reaction a lipid X + a UDP-2-N,3-O-bis[(3R)-3-hydroxyacyl]-alpha-D-glucosamine = a lipid A disaccharide + UDP + H(+). Its pathway is bacterial outer membrane biogenesis; LPS lipid A biosynthesis. Functionally, condensation of UDP-2,3-diacylglucosamine and 2,3-diacylglucosamine-1-phosphate to form lipid A disaccharide, a precursor of lipid A, a phosphorylated glycolipid that anchors the lipopolysaccharide to the outer membrane of the cell. The sequence is that of Lipid-A-disaccharide synthase from Koribacter versatilis (strain Ellin345).